Reading from the N-terminus, the 418-residue chain is MADTSLMPIPGQVDPVPAPRDITPRADGRVDLMGLPKARIQELFAEAGLDAKQAKLRSKQVYHWLYHRGVTDFEAMTDIAKTMRPWLAERFIVGRPNVVEAQHSTDGTRKWLLQTDDGHDFEMVFIPDADRGTLCVSSQVGCTLNCRFCHTGTMRLVRNLTPGEIVGQVMLARDALGEWPKGRMDGLDDVEDTGHYSADGRLLTNIVMMGMGEPLYNFDNVRDALKLVMDGEGLALSKRRITLSTSGVVPMMERCGEEIGVNLAVSLHAVTKDIRDEIVPINKKYGIEELLQACADYPGASNARRITFEYVMLKDKNDTDEHARELVRLLKQYNLPAKVNLIPFNPWPGAAYECSTPERIRAFSNIVFEGGISAPVRTPRGRDIDAACGQLKTAAQKKSRAERDREAAAEAEAAASQA.

A disordered region spans residues Met-1–Asp-21. Catalysis depends on Glu-122, which acts as the Proton acceptor. The region spanning Asp-128–Asp-383 is the Radical SAM core domain. Cysteines 135 and 388 form a disulfide. Positions 142, 146, and 149 each coordinate [4Fe-4S] cluster. S-adenosyl-L-methionine contacts are provided by residues Gly-212–Glu-213, Ser-244, Ser-266–His-268, and Asn-345. Cys-388 serves as the catalytic S-methylcysteine intermediate. The interval Thr-393–Ala-418 is disordered. Basic and acidic residues predominate over residues Ser-399–Ala-408.

It belongs to the radical SAM superfamily. RlmN family. [4Fe-4S] cluster is required as a cofactor.

The protein resides in the cytoplasm. It carries out the reaction adenosine(2503) in 23S rRNA + 2 reduced [2Fe-2S]-[ferredoxin] + 2 S-adenosyl-L-methionine = 2-methyladenosine(2503) in 23S rRNA + 5'-deoxyadenosine + L-methionine + 2 oxidized [2Fe-2S]-[ferredoxin] + S-adenosyl-L-homocysteine. The catalysed reaction is adenosine(37) in tRNA + 2 reduced [2Fe-2S]-[ferredoxin] + 2 S-adenosyl-L-methionine = 2-methyladenosine(37) in tRNA + 5'-deoxyadenosine + L-methionine + 2 oxidized [2Fe-2S]-[ferredoxin] + S-adenosyl-L-homocysteine. Its function is as follows. Specifically methylates position 2 of adenine 2503 in 23S rRNA and position 2 of adenine 37 in tRNAs. m2A2503 modification seems to play a crucial role in the proofreading step occurring at the peptidyl transferase center and thus would serve to optimize ribosomal fidelity. The protein is Dual-specificity RNA methyltransferase RlmN of Erythrobacter litoralis (strain HTCC2594).